Here is a 389-residue protein sequence, read N- to C-terminus: Large envelope protein (389 aa).

Methionine 1 carries the post-translational modification N-acetylmethionine. The N-myristoyl glycine; by host moiety is linked to residue glycine 2. The tract at residues 2–108 (GQNLSTSNPL…PPLRDTHPQA (107 aa)) is pre-S1. Positions 2-163 (GQNLSTSNPL…FSTTGDPAPN (162 aa)) are pre-S. Over 2-170 (GQNLSTSNPL…APNMENITSG (169 aa)) the chain is Virion surface; in external conformation. Residues 2-242 (GQNLSTSNPL…PGYRWMCLRR (241 aa)) lie on the Intravirion; in internal conformation side of the membrane. Positions 75-107 (TTLPANPPPASTNRQSGRQPTPLSPPLRDTHPQ) are disordered. The segment covering 85 to 95 (STNRQSGRQPT) has biased composition (polar residues). Residues 109-163 (MQWNSTTFHQALQDPRVRGLYFPAGGSSSGTLNPVPNTASHISSVFSTTGDPAPN) form a pre-S2 region. A helical membrane pass occupies residues 171-191 (FLGPLLVLQAGFFLLTKILTI). Residues 192–242 (PQSLDSWWTSLNFLGGAPVCLGQNSQSPTSNHSPTSCPPICPGYRWMCLRR) lie on the Intravirion; in external conformation side of the membrane. Residues 243–263 (FIIFLFILLLCLIFLLVLLDY) traverse the membrane as a helical segment. The Virion surface segment spans residues 264–337 (QGMLPVCPLI…WASVRFSWLS (74 aa)). An N-linked (GlcNAc...) asparagine; by host glycan is attached at asparagine 309. Residues 338-358 (LLAPFVQWFAGLSPTVWLLAI) traverse the membrane as a helical segment. Over 359–364 (WMMWYW) the chain is Intravirion. The helical transmembrane segment at 365–387 (GPNLYNILSPFIPLLPIFFCLWV) threads the bilayer. Residues 388-389 (YI) lie on the Virion surface side of the membrane.

Belongs to the orthohepadnavirus major surface antigen family. As to quaternary structure, in its internal form (Li-HBsAg), interacts with the capsid protein and with the isoform S. Interacts with host chaperone CANX. In terms of assembly, associates with host chaperone CANX through its pre-S2 N glycan; this association may be essential for isoform M proper secretion. Interacts with isoform L. Interacts with the antigens of satellite virus HDV (HDVAgs); this interaction is required for encapsidation of HDV genomic RNA. Isoform M is N-terminally acetylated by host at a ratio of 90%, and N-glycosylated by host at the pre-S2 region. Post-translationally, myristoylated.

It is found in the virion membrane. The large envelope protein exists in two topological conformations, one which is termed 'external' or Le-HBsAg and the other 'internal' or Li-HBsAg. In its external conformation the protein attaches the virus to cell receptors and thereby initiating infection. This interaction determines the species specificity and liver tropism. This attachment induces virion internalization predominantly through caveolin-mediated endocytosis. The large envelope protein also assures fusion between virion membrane and endosomal membrane. In its internal conformation the protein plays a role in virion morphogenesis and mediates the contact with the nucleocapsid like a matrix protein. Its function is as follows. The middle envelope protein plays an important role in the budding of the virion. It is involved in the induction of budding in a nucleocapsid independent way. In this process the majority of envelope proteins bud to form subviral lipoprotein particles of 22 nm of diameter that do not contain a nucleocapsid. This is Large envelope protein from Pan troglodytes (Chimpanzee).